The primary structure comprises 396 residues: Arginine biosynthesis bifunctional protein ArgJ (396 aa).

Substrate is bound by residues T150, K177, T188, E267, N391, and T396. Catalysis depends on T188, which acts as the Nucleophile.

The protein belongs to the ArgJ family. As to quaternary structure, heterotetramer of two alpha and two beta chains.

The protein localises to the cytoplasm. The catalysed reaction is N(2)-acetyl-L-ornithine + L-glutamate = N-acetyl-L-glutamate + L-ornithine. The enzyme catalyses L-glutamate + acetyl-CoA = N-acetyl-L-glutamate + CoA + H(+). It participates in amino-acid biosynthesis; L-arginine biosynthesis; L-ornithine and N-acetyl-L-glutamate from L-glutamate and N(2)-acetyl-L-ornithine (cyclic): step 1/1. The protein operates within amino-acid biosynthesis; L-arginine biosynthesis; N(2)-acetyl-L-ornithine from L-glutamate: step 1/4. In terms of biological role, catalyzes two activities which are involved in the cyclic version of arginine biosynthesis: the synthesis of N-acetylglutamate from glutamate and acetyl-CoA as the acetyl donor, and of ornithine by transacetylation between N(2)-acetylornithine and glutamate. In Wolinella succinogenes (strain ATCC 29543 / DSM 1740 / CCUG 13145 / JCM 31913 / LMG 7466 / NCTC 11488 / FDC 602W) (Vibrio succinogenes), this protein is Arginine biosynthesis bifunctional protein ArgJ.